The following is a 199-amino-acid chain: Probable GTP-binding protein EngB (199 aa).

In terms of domain architecture, EngB-type G spans 28 to 199 (DLPEIALAGR…DSWDAILEQV (172 aa)). Residues 36–43 (GRSNVGKS), 63–67 (GKTQL), 81–84 (DVPG), 148–151 (TKAD), and 180–182 (FSS) each bind GTP. The Mg(2+) site is built by S43 and T65.

The protein belongs to the TRAFAC class TrmE-Era-EngA-EngB-Septin-like GTPase superfamily. EngB GTPase family. Requires Mg(2+) as cofactor.

In terms of biological role, necessary for normal cell division and for the maintenance of normal septation. The polypeptide is Probable GTP-binding protein EngB (Streptococcus pyogenes serotype M1).